The chain runs to 197 residues: Putative AgrB-like protein (197 aa).

The next 4 membrane-spanning stretches (helical) occupy residues 29-49 (FGFT…AVGL), 79-99 (SIGC…VPFA), 102-122 (YAWI…APYY), and 143-163 (ILIV…LVLG).

Belongs to the AgrB family.

The protein localises to the cell membrane. Its function is as follows. May be involved in the proteolytic processing of a quorum sensing system signal molecule precursor. The sequence is that of Putative AgrB-like protein from Halalkalibacterium halodurans (strain ATCC BAA-125 / DSM 18197 / FERM 7344 / JCM 9153 / C-125) (Bacillus halodurans).